We begin with the raw amino-acid sequence, 213 residues long: Nicotinate-nucleotide adenylyltransferase (213 aa).

It belongs to the NadD family.

The enzyme catalyses nicotinate beta-D-ribonucleotide + ATP + H(+) = deamido-NAD(+) + diphosphate. Its pathway is cofactor biosynthesis; NAD(+) biosynthesis; deamido-NAD(+) from nicotinate D-ribonucleotide: step 1/1. Catalyzes the reversible adenylation of nicotinate mononucleotide (NaMN) to nicotinic acid adenine dinucleotide (NaAD). This Salmonella typhi protein is Nicotinate-nucleotide adenylyltransferase.